A 152-amino-acid chain; its full sequence is Xanthine-guanine phosphoribosyltransferase (152 aa).

5-phospho-alpha-D-ribose 1-diphosphate contacts are provided by residues 37 to 38, Arg-69, and 88 to 96; these read RG and DDLVDTGGT. Arg-69 contributes to the GMP binding site. Residue Asp-89 coordinates Mg(2+). 2 residues coordinate guanine: Asp-92 and Ile-135. Residues Asp-92 and Ile-135 each coordinate xanthine. Residues 92–96 and 134–135 each bind GMP; these read DTGGT and WI.

It belongs to the purine/pyrimidine phosphoribosyltransferase family. XGPT subfamily. In terms of assembly, homotetramer. The cofactor is Mg(2+).

It is found in the cell inner membrane. It catalyses the reaction GMP + diphosphate = guanine + 5-phospho-alpha-D-ribose 1-diphosphate. The enzyme catalyses XMP + diphosphate = xanthine + 5-phospho-alpha-D-ribose 1-diphosphate. It carries out the reaction IMP + diphosphate = hypoxanthine + 5-phospho-alpha-D-ribose 1-diphosphate. Its pathway is purine metabolism; GMP biosynthesis via salvage pathway; GMP from guanine: step 1/1. The protein operates within purine metabolism; XMP biosynthesis via salvage pathway; XMP from xanthine: step 1/1. Functionally, purine salvage pathway enzyme that catalyzes the transfer of the ribosyl-5-phosphate group from 5-phospho-alpha-D-ribose 1-diphosphate (PRPP) to the N9 position of the 6-oxopurines guanine and xanthine to form the corresponding ribonucleotides GMP (guanosine 5'-monophosphate) and XMP (xanthosine 5'-monophosphate), with the release of PPi. To a lesser extent, also acts on hypoxanthine. This is Xanthine-guanine phosphoribosyltransferase from Pectobacterium atrosepticum (strain SCRI 1043 / ATCC BAA-672) (Erwinia carotovora subsp. atroseptica).